The sequence spans 261 residues: Phosphatidylglycerol--prolipoprotein diacylglyceryl transferase (261 aa).

The next 3 membrane-spanning stretches (helical) occupy residues 20 to 40 (LAIH…VWLA), 54 to 74 (IIDF…LYYV), and 94 to 114 (GGGA…VFSY). R139 lines the a 1,2-diacyl-sn-glycero-3-phospho-(1'-sn-glycerol) pocket. Transmembrane regions (helical) follow at residues 175–195 (MPTF…VMVF), 205–225 (GDIF…VEGM), and 235–255 (ARVS…LFIY).

The protein belongs to the Lgt family.

It is found in the cell membrane. It carries out the reaction L-cysteinyl-[prolipoprotein] + a 1,2-diacyl-sn-glycero-3-phospho-(1'-sn-glycerol) = an S-1,2-diacyl-sn-glyceryl-L-cysteinyl-[prolipoprotein] + sn-glycerol 1-phosphate + H(+). It functions in the pathway protein modification; lipoprotein biosynthesis (diacylglyceryl transfer). In terms of biological role, catalyzes the transfer of the diacylglyceryl group from phosphatidylglycerol to the sulfhydryl group of the N-terminal cysteine of a prolipoprotein, the first step in the formation of mature lipoproteins. In Lactococcus lactis subsp. lactis (strain IL1403) (Streptococcus lactis), this protein is Phosphatidylglycerol--prolipoprotein diacylglyceryl transferase.